We begin with the raw amino-acid sequence, 1234 residues long: ATP-dependent helicase/nuclease subunit A (1234 aa).

Residues 9 to 482 form the UvrD-like helicase ATP-binding domain; that stretch reads STWTDDQWEA…IDLNKNFRSR (474 aa). 30–37 serves as a coordination point for ATP; it reads AAAGSGKT. Residues 509–800 enclose the UvrD-like helicase C-terminal domain; sequence QAELKLGASY…RMMTIHSSKG (292 aa).

The protein belongs to the helicase family. AddA subfamily. In terms of assembly, heterodimer of AddA and AddB/RexB. Mg(2+) serves as cofactor.

The catalysed reaction is Couples ATP hydrolysis with the unwinding of duplex DNA by translocating in the 3'-5' direction.. The enzyme catalyses ATP + H2O = ADP + phosphate + H(+). Functionally, the heterodimer acts as both an ATP-dependent DNA helicase and an ATP-dependent, dual-direction single-stranded exonuclease. Recognizes the chi site generating a DNA molecule suitable for the initiation of homologous recombination. The AddA nuclease domain is required for chi fragment generation; this subunit has the helicase and 3' -&gt; 5' nuclease activities. In Bacillus pumilus (strain SAFR-032), this protein is ATP-dependent helicase/nuclease subunit A.